We begin with the raw amino-acid sequence, 537 residues long: Glutamate--tRNA ligase (537 aa).

Residues 9–19 (PSPTGLQHIGG) carry the 'HIGH' region motif. Zn(2+) contacts are provided by Cys-125, Cys-127, Cys-152, and Glu-154. A 'KMSKS' region motif is present at residues 270–274 (KLSKR). Residue Lys-273 coordinates ATP.

Belongs to the class-I aminoacyl-tRNA synthetase family. Glutamate--tRNA ligase type 1 subfamily. In terms of assembly, monomer. Requires Zn(2+) as cofactor.

It localises to the cytoplasm. It carries out the reaction tRNA(Glu) + L-glutamate + ATP = L-glutamyl-tRNA(Glu) + AMP + diphosphate. Its function is as follows. Catalyzes the attachment of glutamate to tRNA(Glu) in a two-step reaction: glutamate is first activated by ATP to form Glu-AMP and then transferred to the acceptor end of tRNA(Glu). This Treponema pallidum (strain Nichols) protein is Glutamate--tRNA ligase.